The sequence spans 208 residues: Thymidylate kinase (208 aa).

10–17 lines the ATP pocket; the sequence is GLEGAGKS.

This sequence belongs to the thymidylate kinase family.

It catalyses the reaction dTMP + ATP = dTDP + ADP. In terms of biological role, phosphorylation of dTMP to form dTDP in both de novo and salvage pathways of dTTP synthesis. This chain is Thymidylate kinase, found in Glaesserella parasuis serovar 5 (strain SH0165) (Haemophilus parasuis).